Consider the following 414-residue polypeptide: MNTSRLFSLLFQGSLVKRIAAGLVLGIVVALISAPLQETIGFNLAEKVGVLGTIFVKALRAVAPILIFFLVMAALANRKIGTKSNMKEIIVLYLLGTFLAAFVAVIAGFVFPTEVVLATKEDASSAPQAVGQVLFTLILNVVDNPLNAIFKANFIGVLAWSIGLGLALRHASDATKNVLSDFAEGVSKIVHVIISFAPFGVFGLVAETLSDKGLVALGGYVQLLAVLIGTMLFTAFVVNPILVYWKIRRNPYPLVWTCVRESGVTAFFTRSSAANIPVNIELAKRLNLDEETYSVSIPLGANINMAGAAITITILTLAAVHTLGLEVSFVSALLLSIVAALCACGASGVAGGSLLLIPLACSLFGISDDVAAQMIGVGFIIGILQDSTETALNSSTDVLFTAAVCMEEERKNAA.

The next 8 helical transmembrane spans lie at 22–42 (GLVL…TIGF), 54–74 (IFVK…VMAA), 89–109 (IIVL…IAGF), 148–168 (AIFK…GLAL), 189–209 (IVHV…AETL), 223–243 (LLAV…PILV), 305–325 (MAGA…TLGL), and 337–357 (IVAA…LLLI).

It belongs to the dicarboxylate/amino acid:cation symporter (DAACS) (TC 2.A.23) family.

The protein localises to the cell inner membrane. It carries out the reaction L-serine(in) + Na(+)(in) = L-serine(out) + Na(+)(out). The enzyme catalyses L-threonine(in) + Na(+)(in) = L-threonine(out) + Na(+)(out). Involved in the import of serine and threonine into the cell, with the concomitant import of sodium (symport system). In Haemophilus influenzae (strain 86-028NP), this protein is Serine/threonine transporter SstT.